The primary structure comprises 477 residues: Calcium/calmodulin-dependent protein kinase type 1G (477 aa).

The Protein kinase domain maps to 23 to 277 (FIFMEVLGSG…CEKALRHPWI (255 aa)). ATP is bound by residues 29–37 (LGSGAFSEV) and K52. The Proton acceptor role is filled by D143. The autoinhibitory domain stretch occupies residues 277–317 (IDGNTALHRDIYPSVSLQIQKNFAKSKWRQAFNAAAVVHHM). The segment at 297-318 (KNFAKSKWRQAFNAAAVVHHMR) is calmodulin-binding. Residues 326 to 388 (SPSVRQEVEN…SRPSAPSGGR (63 aa)) form a disordered region. Residues 376–388 (SHSSRPSAPSGGR) show a composition bias toward low complexity.

Belongs to the protein kinase superfamily. CAMK Ser/Thr protein kinase family. CaMK subfamily. Post-translationally, may be prenylated on Cys-474. In terms of tissue distribution, highly expressed in brain, in neuronal cell bodies of the central nucleus of amygdala and ventromedial hypothalamic nucleus. Also detected in heart, testis, and kidney.

Its subcellular location is the cytoplasm. It is found in the golgi apparatus membrane. The protein localises to the cell membrane. It carries out the reaction L-seryl-[protein] + ATP = O-phospho-L-seryl-[protein] + ADP + H(+). The enzyme catalyses L-threonyl-[protein] + ATP = O-phospho-L-threonyl-[protein] + ADP + H(+). With respect to regulation, activated by Ca(2+)/calmodulin. Binding of calmodulin is thought to result in a conformational change and leads to activation through phosphorylation by CAMKK1. In terms of biological role, calcium/calmodulin-dependent protein kinase belonging to a proposed calcium-triggered signaling cascade. In vitro phosphorylates transcription factor CREB1. This Mus musculus (Mouse) protein is Calcium/calmodulin-dependent protein kinase type 1G (Camk1g).